Here is a 323-residue protein sequence, read N- to C-terminus: Acetyl-coenzyme A carboxylase carboxyl transferase subunit alpha (323 aa).

Residues 32–293 form the CoA carboxyltransferase C-terminal domain; it reads NISEEVAKLQ…RKALAAQLES (262 aa).

This sequence belongs to the AccA family. As to quaternary structure, acetyl-CoA carboxylase is a heterohexamer composed of biotin carboxyl carrier protein (AccB), biotin carboxylase (AccC) and two subunits each of ACCase subunit alpha (AccA) and ACCase subunit beta (AccD).

The protein localises to the cytoplasm. It catalyses the reaction N(6)-carboxybiotinyl-L-lysyl-[protein] + acetyl-CoA = N(6)-biotinyl-L-lysyl-[protein] + malonyl-CoA. Its pathway is lipid metabolism; malonyl-CoA biosynthesis; malonyl-CoA from acetyl-CoA: step 1/1. In terms of biological role, component of the acetyl coenzyme A carboxylase (ACC) complex. First, biotin carboxylase catalyzes the carboxylation of biotin on its carrier protein (BCCP) and then the CO(2) group is transferred by the carboxyltransferase to acetyl-CoA to form malonyl-CoA. The chain is Acetyl-coenzyme A carboxylase carboxyl transferase subunit alpha from Alcanivorax borkumensis (strain ATCC 700651 / DSM 11573 / NCIMB 13689 / SK2).